A 547-amino-acid polypeptide reads, in one-letter code: T-complex protein 1 subunit alpha (547 aa).

Belongs to the TCP-1 chaperonin family. In terms of assembly, heterooligomeric complex of about 850 to 900 kDa that forms two stacked rings, 12 to 16 nm in diameter.

The protein localises to the cytoplasm. Molecular chaperone; assists the folding of proteins upon ATP hydrolysis. Known to play a role, in vitro, in the folding of actin and tubulin. The protein is T-complex protein 1 subunit alpha of Tetrahymena pyriformis.